A 901-amino-acid polypeptide reads, in one-letter code: HTH-type transcriptional regulator MalT (901 aa).

ATP is bound at residue 39–46 (SPAGYGKT). The HTH luxR-type domain occupies 829–894 (ELIHTSPLTQ…AAVQHAQKLL (66 aa)). Residues 853 to 872 (NEQIAGELEVAATTIKTHIR) constitute a DNA-binding region (H-T-H motif).

It belongs to the MalT family. As to quaternary structure, monomer in solution. Oligomerizes to an active state in the presence of the positive effectors ATP and maltotriose.

Activated by ATP and maltotriose, which are both required for DNA binding. Its function is as follows. Positively regulates the transcription of the maltose regulon whose gene products are responsible for uptake and catabolism of malto-oligosaccharides. Specifically binds to the promoter region of its target genes, recognizing a short DNA motif called the MalT box. This Shigella sonnei (strain Ss046) protein is HTH-type transcriptional regulator MalT.